The following is a 27-amino-acid chain: Trichocyst matrix protein T4-C (27 aa).

This sequence belongs to the TMP family.

The protein localises to the trichocyst. Structural protein that crystallize inside the trichocyst matrix. The polypeptide is Trichocyst matrix protein T4-C (T4C) (Paramecium tetraurelia).